A 293-amino-acid polypeptide reads, in one-letter code: MKNLKGIFSALLVSFNADGSINEKGLRQIVRYNIDKMKVDGLYVGGSTGENFMLSTEEKKEIFRIAKDEAKDEIALIAQVGSVNLQEAIELGKYATELGYDSLSAVTPFYYKFSFPEIKHYYDSIIEATGNYMIVYSIPFLTGVNIGVEQFGELYKNPKVLGVKFTAGDFYLLERLKKAYPNHLIWAGFDEMMLPAASLGVDGAIGSTFNVNGVRARQIFELTQAGKLKEALEIQHVTNDLIEGILANGLYLTIKELLKLDGVEAGYCREPMTKELSPEKVAFAKELKAKYLS.

Positions 47, 48, and 136 each coordinate aceneuramate. Catalysis depends on Y136, which acts as the Proton donor. K164 acts as the Schiff-base intermediate with substrate in catalysis. T166, G188, D190, E191, S207, and Y251 together coordinate aceneuramate.

Belongs to the DapA family. NanA subfamily. Homotetramer.

The protein localises to the cytoplasm. The catalysed reaction is aceneuramate = aldehydo-N-acetyl-D-mannosamine + pyruvate. It participates in amino-sugar metabolism; N-acetylneuraminate degradation; D-fructose 6-phosphate from N-acetylneuraminate: step 1/5. Its function is as follows. Catalyzes the reversible aldol cleavage of N-acetylneuraminic acid (sialic acid; Neu5Ac) to form pyruvate and N-acetylmannosamine (ManNAc) via a Schiff base intermediate. This is N-acetylneuraminate lyase from Pasteurella multocida (strain Pm70).